The chain runs to 1376 residues: Protein FAM135B (1376 aa).

The span at 431 to 442 (NEDECEFSEESP) shows a compositional bias: acidic residues. Positions 431 to 489 (NEDECEFSEESPSENTHVGSKPHSIQSTTVHENASFEKPNVGTKAQEDCSTEGPEQGFD) are disordered. The segment covering 443-462 (SENTHVGSKPHSIQSTTVHE) has biased composition (polar residues).

Belongs to the FAM135 family.

The polypeptide is Protein FAM135B (fam135b) (Xenopus laevis (African clawed frog)).